Reading from the N-terminus, the 209-residue chain is Small ribosomal subunit protein uS3 (209 aa).

Positions 38–107 (IRKIIKNKYY…RVVINIEEIK (70 aa)) constitute a KH type-2 domain.

This sequence belongs to the universal ribosomal protein uS3 family. Part of the 30S ribosomal subunit. Forms a tight complex with proteins S10 and S14.

Binds the lower part of the 30S subunit head. Binds mRNA in the 70S ribosome, positioning it for translation. This Thermotoga maritima (strain ATCC 43589 / DSM 3109 / JCM 10099 / NBRC 100826 / MSB8) protein is Small ribosomal subunit protein uS3.